Consider the following 784-residue polypeptide: E3 UFM1-protein ligase 1 homolog (784 aa).

A disordered region spans residues 405–480; sequence SVSTQELEDD…RGGGAGNKKA (76 aa). The span at 444–454 shows a compositional bias: basic residues; the sequence is KSTKKHQRGKA.

Belongs to the UFL1 family.

Functionally, E3 UFM1-protein ligase that mediates ufmylation of target proteins. The polypeptide is E3 UFM1-protein ligase 1 homolog (Drosophila yakuba (Fruit fly)).